A 61-amino-acid polypeptide reads, in one-letter code: Cecropin-D (61 aa).

The N-terminal stretch at Met1 to Ala22 is a signal peptide. A propeptide spans Ala23 to Pro24 (removed by a dipeptidylpeptidase). The residue at position 60 (Gln60) is a Glutamine amide.

This sequence belongs to the cecropin family. As to expression, mainly in fat body. Lower in hemocytes. Not expressed in midguts, malpighian tubules and silk glands.

It localises to the secreted. Functionally, cecropins have lytic and antibacterial activity against several Gram-positive and Gram-negative bacteria. This chain is Cecropin-D (CECD), found in Bombyx mori (Silk moth).